A 161-amino-acid chain; its full sequence is SsrA-binding protein (161 aa).

The tract at residues K140 to G161 is disordered.

The protein belongs to the SmpB family.

It localises to the cytoplasm. Its function is as follows. Required for rescue of stalled ribosomes mediated by trans-translation. Binds to transfer-messenger RNA (tmRNA), required for stable association of tmRNA with ribosomes. tmRNA and SmpB together mimic tRNA shape, replacing the anticodon stem-loop with SmpB. tmRNA is encoded by the ssrA gene; the 2 termini fold to resemble tRNA(Ala) and it encodes a 'tag peptide', a short internal open reading frame. During trans-translation Ala-aminoacylated tmRNA acts like a tRNA, entering the A-site of stalled ribosomes, displacing the stalled mRNA. The ribosome then switches to translate the ORF on the tmRNA; the nascent peptide is terminated with the 'tag peptide' encoded by the tmRNA and targeted for degradation. The ribosome is freed to recommence translation, which seems to be the essential function of trans-translation. This is SsrA-binding protein from Sphingopyxis alaskensis (strain DSM 13593 / LMG 18877 / RB2256) (Sphingomonas alaskensis).